The chain runs to 67 residues: Conotoxin Pu5.1 (67 aa).

The signal sequence occupies residues 1 to 22 (MRCVPVFVILLLLIASTPSVDA). The propeptide occupies 23–51 (RPNPKDDVPLASFHEDANGILQMLWKKGR). At Trp-63 the chain carries Tryptophan amide.

This sequence belongs to the conotoxin T superfamily. In terms of processing, contains 2 disulfide bonds that can be either 'C1-C3, C2-C4' or 'C1-C4, C2-C3', since these disulfide connectivities have been observed for conotoxins with cysteine framework V (for examples, see AC P0DQQ7 and AC P81755). In terms of tissue distribution, expressed by the venom duct.

Its subcellular location is the secreted. In Conus pulicarius (Flea-bitten cone), this protein is Conotoxin Pu5.1.